The chain runs to 194 residues: Large ribosomal subunit protein eL15 (194 aa).

The segment at 164–194 (SAGKKGRGLRNKGKGAEKIRPSIRANEGKGK) is disordered. A compositionally biased stretch (basic residues) spans 167–176 (KKGRGLRNKG). The segment covering 177-194 (KGAEKIRPSIRANEGKGK) has biased composition (basic and acidic residues).

The protein belongs to the eukaryotic ribosomal protein eL15 family.

The sequence is that of Large ribosomal subunit protein eL15 (rpl15e) from Pyrococcus abyssi (strain GE5 / Orsay).